Consider the following 328-residue polypeptide: Cell division protein ZipA (328 aa).

At 1-6 the chain is on the periplasmic side; that stretch reads MMQDLR. A helical membrane pass occupies residues 7 to 27; the sequence is LILIVVGAIAIIALLLHGLWT. At 28-328 the chain is on the cytoplasmic side; the sequence is SRKERSSLFR…REVLDANTIA (301 aa). A compositionally biased stretch (basic and acidic residues) spans 61-72; it reads GEVRVRTSHPQE. The tract at residues 61–183 is disordered; that stretch reads GEVRVRTSHP…EPVAPAPEAK (123 aa). Polar residues-rich tracts occupy residues 95 to 104 and 164 to 174; these read KSAQVKTASR and APQQHVESQQE.

The protein belongs to the ZipA family. In terms of assembly, interacts with FtsZ via their C-terminal domains.

The protein resides in the cell inner membrane. Functionally, essential cell division protein that stabilizes the FtsZ protofilaments by cross-linking them and that serves as a cytoplasmic membrane anchor for the Z ring. Also required for the recruitment to the septal ring of downstream cell division proteins. This Yersinia pestis bv. Antiqua (strain Antiqua) protein is Cell division protein ZipA.